A 348-amino-acid chain; its full sequence is Phenylalanine--tRNA ligase alpha subunit (348 aa).

Residue glutamate 259 participates in Mg(2+) binding.

Belongs to the class-II aminoacyl-tRNA synthetase family. Phe-tRNA synthetase alpha subunit type 1 subfamily. Tetramer of two alpha and two beta subunits. The cofactor is Mg(2+).

The protein localises to the cytoplasm. The catalysed reaction is tRNA(Phe) + L-phenylalanine + ATP = L-phenylalanyl-tRNA(Phe) + AMP + diphosphate + H(+). This chain is Phenylalanine--tRNA ligase alpha subunit, found in Limosilactobacillus reuteri (strain DSM 20016) (Lactobacillus reuteri).